The following is a 289-amino-acid chain: 2-dehydro-3-deoxyphosphooctonate aldolase (289 aa).

Belongs to the KdsA family.

It localises to the cytoplasm. It catalyses the reaction D-arabinose 5-phosphate + phosphoenolpyruvate + H2O = 3-deoxy-alpha-D-manno-2-octulosonate-8-phosphate + phosphate. It functions in the pathway carbohydrate biosynthesis; 3-deoxy-D-manno-octulosonate biosynthesis; 3-deoxy-D-manno-octulosonate from D-ribulose 5-phosphate: step 2/3. Its pathway is bacterial outer membrane biogenesis; lipopolysaccharide biosynthesis. The sequence is that of 2-dehydro-3-deoxyphosphooctonate aldolase from Cupriavidus necator (strain ATCC 17699 / DSM 428 / KCTC 22496 / NCIMB 10442 / H16 / Stanier 337) (Ralstonia eutropha).